A 177-amino-acid polypeptide reads, in one-letter code: Large ribosomal subunit protein uL6 (177 aa).

It belongs to the universal ribosomal protein uL6 family. In terms of assembly, part of the 50S ribosomal subunit.

Functionally, this protein binds to the 23S rRNA, and is important in its secondary structure. It is located near the subunit interface in the base of the L7/L12 stalk, and near the tRNA binding site of the peptidyltransferase center. The polypeptide is Large ribosomal subunit protein uL6 (Salmonella dublin (strain CT_02021853)).